The primary structure comprises 299 residues: Oxygen-dependent coproporphyrinogen-III oxidase (299 aa).

Substrate is bound at residue Ser-92. Residues His-96 and His-106 each contribute to the a divalent metal cation site. His-106 acts as the Proton donor in catalysis. Position 108 to 110 (108 to 110 (NVR)) interacts with substrate. Residues His-145 and His-175 each contribute to the a divalent metal cation site. The segment at 240 to 275 (YVEFNLVWDRGTLFGLQTGGRTESILMSMPPLVRWE) is important for dimerization. Substrate is bound at residue 258–260 (GGR).

The protein belongs to the aerobic coproporphyrinogen-III oxidase family. Homodimer. It depends on a divalent metal cation as a cofactor.

The protein resides in the cytoplasm. The enzyme catalyses coproporphyrinogen III + O2 + 2 H(+) = protoporphyrinogen IX + 2 CO2 + 2 H2O. The protein operates within porphyrin-containing compound metabolism; protoporphyrin-IX biosynthesis; protoporphyrinogen-IX from coproporphyrinogen-III (O2 route): step 1/1. Involved in the heme biosynthesis. Catalyzes the aerobic oxidative decarboxylation of propionate groups of rings A and B of coproporphyrinogen-III to yield the vinyl groups in protoporphyrinogen-IX. The sequence is that of Oxygen-dependent coproporphyrinogen-III oxidase from Klebsiella pneumoniae subsp. pneumoniae (strain ATCC 700721 / MGH 78578).